Here is a 319-residue protein sequence, read N- to C-terminus: Mitochondrial fission regulator 1-like-A (319 aa).

Positions 1–37 (MASLGAAAEPERNLFGKDEAEAYESPEGRRSGRKKRT) are disordered. Over residues 9-30 (EPERNLFGKDEAEAYESPEGRR) the composition is skewed to basic and acidic residues.

The protein belongs to the MTFR1 family.

It localises to the mitochondrion outer membrane. In terms of biological role, mitochondrial protein required for adaptation of miochondrial dynamics to metabolic changes. Regulates mitochondrial morphology at steady state and mediates AMPK-dependent stress-induced mitochondrial fragmentation via the control of OPA1 levels. This Xenopus laevis (African clawed frog) protein is Mitochondrial fission regulator 1-like-A (mtfr1l-a).